The chain runs to 132 residues: ATP synthase epsilon chain 1 (132 aa).

It belongs to the ATPase epsilon chain family. As to quaternary structure, F-type ATPases have 2 components, CF(1) - the catalytic core - and CF(0) - the membrane proton channel. CF(1) has five subunits: alpha(3), beta(3), gamma(1), delta(1), epsilon(1). CF(0) has three main subunits: a, b and c.

It localises to the cell inner membrane. Functionally, produces ATP from ADP in the presence of a proton gradient across the membrane. This chain is ATP synthase epsilon chain 1, found in Cereibacter sphaeroides (strain ATCC 17023 / DSM 158 / JCM 6121 / CCUG 31486 / LMG 2827 / NBRC 12203 / NCIMB 8253 / ATH 2.4.1.) (Rhodobacter sphaeroides).